We begin with the raw amino-acid sequence, 191 residues long: Ribosomal RNA small subunit methyltransferase G (191 aa).

S-adenosyl-L-methionine is bound by residues G62, F67, 111-112, and R124; that span reads IE.

It belongs to the methyltransferase superfamily. RNA methyltransferase RsmG family.

The protein localises to the cytoplasm. It carries out the reaction guanosine(527) in 16S rRNA + S-adenosyl-L-methionine = N(7)-methylguanosine(527) in 16S rRNA + S-adenosyl-L-homocysteine. In terms of biological role, specifically methylates the N7 position of guanine in position 527 of 16S rRNA. The protein is Ribosomal RNA small subunit methyltransferase G of Rickettsia akari (strain Hartford).